A 559-amino-acid chain; its full sequence is Dihydroxy-acid dehydratase (559 aa).

Position 78 (Asp78) interacts with Mg(2+). Cys119 serves as a coordination point for [2Fe-2S] cluster. Mg(2+)-binding residues include Asp120 and Lys121. Residue Lys121 is modified to N6-carboxylysine. Cys191 lines the [2Fe-2S] cluster pocket. Glu442 lines the Mg(2+) pocket. Ser468 serves as the catalytic Proton acceptor.

The protein belongs to the IlvD/Edd family. In terms of assembly, homodimer. It depends on [2Fe-2S] cluster as a cofactor. Mg(2+) serves as cofactor.

The catalysed reaction is (2R)-2,3-dihydroxy-3-methylbutanoate = 3-methyl-2-oxobutanoate + H2O. It carries out the reaction (2R,3R)-2,3-dihydroxy-3-methylpentanoate = (S)-3-methyl-2-oxopentanoate + H2O. It participates in amino-acid biosynthesis; L-isoleucine biosynthesis; L-isoleucine from 2-oxobutanoate: step 3/4. The protein operates within amino-acid biosynthesis; L-valine biosynthesis; L-valine from pyruvate: step 3/4. Functionally, functions in the biosynthesis of branched-chain amino acids. Catalyzes the dehydration of (2R,3R)-2,3-dihydroxy-3-methylpentanoate (2,3-dihydroxy-3-methylvalerate) into 2-oxo-3-methylpentanoate (2-oxo-3-methylvalerate) and of (2R)-2,3-dihydroxy-3-methylbutanoate (2,3-dihydroxyisovalerate) into 2-oxo-3-methylbutanoate (2-oxoisovalerate), the penultimate precursor to L-isoleucine and L-valine, respectively. This is Dihydroxy-acid dehydratase from Agathobacter rectalis (strain ATCC 33656 / DSM 3377 / JCM 17463 / KCTC 5835 / VPI 0990) (Eubacterium rectale).